The primary structure comprises 345 residues: Beta-2-glycoprotein 1 (345 aa).

An N-terminal signal peptide occupies residues Met1–Ala19. 4 Sushi domains span residues Arg21–Pro81, Arg82–Pro139, Ile140–Glu202, and Val203–Ala262. 11 disulfides stabilise this stretch: Cys23–Cys66, Cys51–Cys79, Cys84–Cys124, Cys110–Cys137, Cys142–Cys188, Cys174–Cys200, Cys205–Cys248, Cys234–Cys260, Cys264–Cys315, Cys300–Cys325, and Cys307–Cys345. Thr33 is a glycosylation site (O-linked (GalNAc...) threonine). O-linked (GalNAc...) threonine glycosylation occurs at Thr149. Residues Asn162, Asn183, and Asn193 are each glycosylated (N-linked (GlcNAc...) asparagine). N-linked (GlcNAc...) asparagine glycosylation occurs at Asn253. Positions Ser263 to Cys345 are sushi-like.

In terms of tissue distribution, expressed by the liver and secreted in plasma.

It is found in the secreted. Functionally, binds to various kinds of negatively charged substances such as heparin, phospholipids, and dextran sulfate. May prevent activation of the intrinsic blood coagulation cascade by binding to phospholipids on the surface of damaged cells. This is Beta-2-glycoprotein 1 (APOH) from Pan troglodytes (Chimpanzee).